We begin with the raw amino-acid sequence, 283 residues long: 2-hydroxy-6-oxononadienedioate/2-hydroxy-6-oxononatrienedioate hydrolase (283 aa).

In terms of domain architecture, AB hydrolase-1 spans 35–269 (VVVMFHGSGP…KCGHWAQWEH (235 aa)). Catalysis depends on His-263, which acts as the Proton acceptor.

The protein belongs to the AB hydrolase superfamily. MhpC family. As to quaternary structure, homodimer.

The enzyme catalyses (2Z,4E)-2-hydroxy-6-oxonona-2,4-dienedioate + H2O = (2Z)-2-hydroxypenta-2,4-dienoate + succinate + H(+). The catalysed reaction is (2Z,4E,7E)-2-hydroxy-6-oxonona-2,4,7-trienedioate + H2O = (2Z)-2-hydroxypenta-2,4-dienoate + fumarate + H(+). It participates in aromatic compound metabolism; 3-phenylpropanoate degradation. Catalyzes the cleavage of the C5-C6 bond of 2-hydroxy-6-oxononadienedioate and 2-hydroxy-6-oxononatrienedioate, a dienol ring fission product of the bacterial meta-cleavage pathway for degradation of phenylpropionic acid. This chain is 2-hydroxy-6-oxononadienedioate/2-hydroxy-6-oxononatrienedioate hydrolase, found in Pseudomonas sp.